A 755-amino-acid polypeptide reads, in one-letter code: Catalase-peroxidase (755 aa).

Positions 91–245 (WHSAGTYRTA…LAAVQMGLIY (155 aa)) form a cross-link, tryptophyl-tyrosyl-methioninium (Trp-Tyr) (with M-271). Histidine 92 (proton acceptor) is an active-site residue. Residues 193-229 (DNRYGKDPESMQPPGEGTLVAEPAEHGNEESRTNQGE) are disordered. The segment covering 215-224 (PAEHGNEESR) has biased composition (basic and acidic residues). The tryptophyl-tyrosyl-methioninium (Tyr-Met) (with W-91) cross-link spans 245-271 (YVNPEGPEGNPDPVASAKDIRETFGRM). Position 286 (histidine 286) interacts with heme.

Belongs to the peroxidase family. Peroxidase/catalase subfamily. In terms of assembly, homodimer or homotetramer. It depends on heme b as a cofactor. In terms of processing, formation of the three residue Trp-Tyr-Met cross-link is important for the catalase, but not the peroxidase activity of the enzyme.

It carries out the reaction H2O2 + AH2 = A + 2 H2O. The enzyme catalyses 2 H2O2 = O2 + 2 H2O. In terms of biological role, bifunctional enzyme with both catalase and broad-spectrum peroxidase activity. This is Catalase-peroxidase from Pseudomonas fluorescens (strain Pf0-1).